A 360-amino-acid chain; its full sequence is Histidinol-phosphate aminotransferase (360 aa).

Lys223 carries the post-translational modification N6-(pyridoxal phosphate)lysine.

Belongs to the class-II pyridoxal-phosphate-dependent aminotransferase family. Histidinol-phosphate aminotransferase subfamily. In terms of assembly, homodimer. Pyridoxal 5'-phosphate serves as cofactor.

The catalysed reaction is L-histidinol phosphate + 2-oxoglutarate = 3-(imidazol-4-yl)-2-oxopropyl phosphate + L-glutamate. Its pathway is amino-acid biosynthesis; L-histidine biosynthesis; L-histidine from 5-phospho-alpha-D-ribose 1-diphosphate: step 7/9. The protein is Histidinol-phosphate aminotransferase of Bacillus subtilis subsp. natto.